A 314-amino-acid chain; its full sequence is Dual specificity protein phosphatase 2 (314 aa).

The region spanning 23-144 is the Rhodanese domain; it reads EAERTLLLDC…FQGCCPDLCS (122 aa). The Tyrosine-protein phosphatase domain occupies 172 to 313; that stretch reads GPVEILPYLF…LLQFETQVLC (142 aa). Catalysis depends on Cys257, which acts as the Phosphocysteine intermediate.

Belongs to the protein-tyrosine phosphatase family. Non-receptor class dual specificity subfamily. In terms of assembly, interacts with MAPK14; this interaction does not lead to catalytic activation of DUSP2 and dephosphrylation of MAPK14. Expressed in hematopoietic tissues.

The protein resides in the nucleus. The catalysed reaction is O-phospho-L-tyrosyl-[protein] + H2O = L-tyrosyl-[protein] + phosphate. It catalyses the reaction O-phospho-L-threonyl-[protein] + H2O = L-threonyl-[protein] + phosphate. Functionally, dephosphorylates both phosphorylated Thr and Tyr residues in MAPK1, and dephosphorylation of phosphotyrosine is slightly faster than that of phosphothreonine. Can dephosphorylate MAPK1. The sequence is that of Dual specificity protein phosphatase 2 from Homo sapiens (Human).